Reading from the N-terminus, the 579-residue chain is Glutamine--tRNA ligase (579 aa).

The 'HIGH' region signature appears at 41–51 (PEPNGYLHIGH). ATP contacts are provided by residues 42 to 44 (EPN) and 48 to 54 (HIGHAKA). Residues Asp-74 and Tyr-218 each coordinate L-glutamine. Residues Thr-237, 285 to 286 (RL), and 293 to 295 (MSK) contribute to the ATP site. Positions 292–296 (VMSKR) match the 'KMSKS' region motif.

The protein belongs to the class-I aminoacyl-tRNA synthetase family. As to quaternary structure, monomer.

The protein resides in the cytoplasm. The enzyme catalyses tRNA(Gln) + L-glutamine + ATP = L-glutaminyl-tRNA(Gln) + AMP + diphosphate. This is Glutamine--tRNA ligase from Xanthomonas oryzae pv. oryzae (strain MAFF 311018).